Reading from the N-terminus, the 194-residue chain is RNA polymerase II subunit A C-terminal domain phosphatase SSU72 like protein 2 (194 aa).

The protein belongs to the SSU72 phosphatase family.

It is found in the nucleus. The catalysed reaction is O-phospho-L-seryl-[protein] + H2O = L-seryl-[protein] + phosphate. It carries out the reaction O-phospho-L-threonyl-[protein] + H2O = L-threonyl-[protein] + phosphate. In terms of biological role, protein phosphatase that catalyzes the dephosphorylation of the C-terminal domain of RNA polymerase II. Plays a role in RNA processing and termination. This Homo sapiens (Human) protein is RNA polymerase II subunit A C-terminal domain phosphatase SSU72 like protein 2.